A 485-amino-acid chain; its full sequence is Glutamyl-tRNA(Gln) amidotransferase subunit A (485 aa).

Catalysis depends on charge relay system residues Lys-79 and Ser-154. The active-site Acyl-ester intermediate is the Ser-178.

Belongs to the amidase family. GatA subfamily. As to quaternary structure, heterotrimer of A, B and C subunits.

The enzyme catalyses L-glutamyl-tRNA(Gln) + L-glutamine + ATP + H2O = L-glutaminyl-tRNA(Gln) + L-glutamate + ADP + phosphate + H(+). Functionally, allows the formation of correctly charged Gln-tRNA(Gln) through the transamidation of misacylated Glu-tRNA(Gln) in organisms which lack glutaminyl-tRNA synthetase. The reaction takes place in the presence of glutamine and ATP through an activated gamma-phospho-Glu-tRNA(Gln). The protein is Glutamyl-tRNA(Gln) amidotransferase subunit A of Staphylococcus carnosus (strain TM300).